The chain runs to 449 residues: Putative gustatory receptor 77a (449 aa).

Over 1–27 the chain is Cytoplasmic; it reads MPLPLGDPLALAVSPQLGYIRITAMPR. Residues 28–50 form a helical membrane-spanning segment; that stretch reads WLQLPGMSALGILYSLTRVFGLM. Over 51–70 the chain is Extracellular; sequence ATANWSPRGIKRVRQSLYLR. A helical transmembrane segment spans residues 71–93; the sequence is IHGCVMLIFVGCFSPFAFWCIFQ. Over 94 to 102 the chain is Cytoplasmic; the sequence is RMAFLRQNR. The chain crosses the membrane as a helical span at residues 103-125; the sequence is ILLMIGFNRYVLLLVCAFMTLWI. Residues 126 to 205 lie on the Extracellular side of the membrane; it reads HCFKQAEIIG…VRRNFMYACS (80 aa). A helical transmembrane segment spans residues 206–228; sequence LVFVSVCQAILQLSLGMYTMAIL. Residues 229-298 lie on the Cytoplasmic side of the membrane; sequence FLGHLVRHSN…LLKLHRSICS (70 aa). Residues 299–321 traverse the membrane as a helical segment; it reads LCAVQAVCFLGFVPLECTIHLFF. Residues 322–340 lie on the Extracellular side of the membrane; that stretch reads TYFMKYSKFILRKYGRSFP. A helical membrane pass occupies residues 341 to 363; it reads LNYFAIAFLVGLFTNLLLVILPT. At 364–420 the chain is on the cytoplasmic side; the sequence is YYSERRFNCTREIIKGGGLAFPSRITVKQLRHTMHFYGLYLKNVEHVFAVSACGLFK. A helical transmembrane segment spans residues 421-443; sequence LNNAILFCIVGAILEYLMILIQF. Residues 444 to 449 are Extracellular-facing; it reads DKVLNK.

It belongs to the insect chemoreceptor superfamily. Gustatory receptor (GR) family. Gr77a subfamily. In larvae, is expressed in dorsal pharyngeal sense organ.

It localises to the cell membrane. Its function is as follows. Probable gustatory receptor which mediates acceptance or avoidance behavior, depending on its substrates. The sequence is that of Putative gustatory receptor 77a (Gr77a) from Drosophila melanogaster (Fruit fly).